A 214-amino-acid chain; its full sequence is Pyrrolidone-carboxylate peptidase (214 aa).

Residues glutamate 79, cysteine 142, and histidine 166 contribute to the active site.

The protein belongs to the peptidase C15 family. As to quaternary structure, homotetramer.

It localises to the cytoplasm. The enzyme catalyses Release of an N-terminal pyroglutamyl group from a polypeptide, the second amino acid generally not being Pro.. Its function is as follows. Removes 5-oxoproline from various penultimate amino acid residues except L-proline. The protein is Pyrrolidone-carboxylate peptidase of Fusobacterium nucleatum subsp. nucleatum (strain ATCC 25586 / DSM 15643 / BCRC 10681 / CIP 101130 / JCM 8532 / KCTC 2640 / LMG 13131 / VPI 4355).